We begin with the raw amino-acid sequence, 624 residues long: Kelch-like protein diablo (624 aa).

Residues 1-55 (MGDPLLPGSTGLGSGSATAATGGSVTAGSGLGNGGTGGAERPPSPARLTHTSEKH) form a disordered region. Positions 15 to 28 (GSATAATGGSVTAG) are enriched in low complexity. The span at 29–38 (SGLGNGGTGG) shows a compositional bias: gly residues. Positions 73–140 (CDVVLNVGGR…CYTAHIIVEE (68 aa)) constitute a BTB domain. Residues 175 to 277 (CLGIRAFADT…SPKFLVGTVG (103 aa)) form the BACK domain. 6 Kelch repeats span residues 324-370 (VLFA…VLND), 372-418 (LYAV…VLDG), 419-465 (FLYA…VLSG), 467-512 (LYAI…VFNN), 514-559 (IYAV…VVNG), and 560-606 (QLYA…VMRA).

Its pathway is protein modification; protein ubiquitination. Its function is as follows. Probable substrate-specific adapter of an E3 ubiquitin-protein ligase complex which mediates the ubiquitination and subsequent proteasomal degradation of target proteins. May have a role in synapse differentiation and growth. The protein is Kelch-like protein diablo of Drosophila grimshawi (Hawaiian fruit fly).